Here is a 478-residue protein sequence, read N- to C-terminus: 3-isopropylmalate dehydratase large subunit (478 aa).

Residues Cys-359, Cys-417, and Cys-420 each contribute to the [4Fe-4S] cluster site.

This sequence belongs to the aconitase/IPM isomerase family. LeuC type 1 subfamily. Heterodimer of LeuC and LeuD. [4Fe-4S] cluster is required as a cofactor.

The catalysed reaction is (2R,3S)-3-isopropylmalate = (2S)-2-isopropylmalate. The protein operates within amino-acid biosynthesis; L-leucine biosynthesis; L-leucine from 3-methyl-2-oxobutanoate: step 2/4. Functionally, catalyzes the isomerization between 2-isopropylmalate and 3-isopropylmalate, via the formation of 2-isopropylmaleate. This is 3-isopropylmalate dehydratase large subunit from Anaeromyxobacter sp. (strain Fw109-5).